The following is a 1210-amino-acid chain: Ice nucleation protein (1210 aa).

The segment at 165–1156 (AVYGSTLTGA…LSGGENSTLI (992 aa)) is octapeptide periodicity.

It belongs to the bacterial ice nucleation protein family.

It is found in the cell outer membrane. Its function is as follows. Ice nucleation proteins enable bacteria to nucleate crystallization in supercooled water. The chain is Ice nucleation protein (inaW) from Pseudomonas fluorescens.